Consider the following 407-residue polypeptide: Cell division control protein 12 (407 aa).

Serine 2 is modified (N-acetylserine). A Septin-type G domain is found at 31–314; sequence EGGTFTVMLC…ETYRRLRLEG (284 aa). The interval 41–48 is G1 motif; that stretch reads GESGLGKT. GTP-binding positions include 41–48, threonine 75, glycine 101, 180–188, glycine 247, and arginine 263; these read GESGLGKT and KADTLTAQE. The G3 motif stretch occupies residues 98 to 101; it reads DTPG. Positions 179 to 182 are G4 motif; sequence AKAD. A coiled-coil region spans residues 344 to 406; it reads EEENALKKYF…KSLQVKKSHL (63 aa).

The protein belongs to the TRAFAC class TrmE-Era-EngA-EngB-Septin-like GTPase superfamily. Septin GTPase family. Component of the septin complex which consists of CDC3, CDC10, CDC11, CDC12 and probably SHS1 and rearranges to a cortical collar of highly ordered filaments at the mother-bud-neck. A complex formed by CDC3, CDC10, CDC11 and CDC12 is capable of forming long filaments in vitro and the components seem to be present in a 2:2:2:2 arrangement in vivo. The filaments are proposed to be formed by the end-to-end polymerization of CDC3-CDC12-CDC11 complexes with CDC10 serving as a bridge to bundle the polymers into paired filaments. Component of the GIN4 complex composed of at least BNI5, CDC3, CDC10, CDC11, CDC12, GIN4, NAP1 and SHS1. Self-associates. Interacts with SYP1.

It localises to the membrane. Its subcellular location is the bud neck. Functionally, septins are GTPases involved in cytokinesis that assemble early in the cell cycle as a patch at the incipient bud site and form a ring approximate 15 minutes before bud emergence, which transforms into an hour-glass shaped collar of cortical filaments that spans both sides of the mother-bud neck. This collar persists until just before cytokinesis, when it splits into two rings that occupy opposite sides of the neck. The septins at the bud neck serve as a structural scaffold that recruits different components involved in diverse processes at specific stages during the cell cycle. Many proteins bind asymmetrically to the septin collar. The septin assembly is regulated by protein kinases GIN4 and/or CLA4. May act by recruiting MYO1 and HOF1, a protein involved in septation, to the site of cleavage. Septins are also involved in cell morphogenesis, bud site selection, chitin deposition, cell cycle regulation, cell compartmentalization and spore wall formation. In Saccharomyces cerevisiae (strain ATCC 204508 / S288c) (Baker's yeast), this protein is Cell division control protein 12 (CDC12).